The following is a 570-amino-acid chain: Urease subunit alpha (570 aa).

The 439-residue stretch at 132–570 (GGIDTHVHFL…VPMARRYFLF (439 aa)) folds into the Urease domain. 3 residues coordinate Ni(2+): His-137, His-139, and Lys-220. Residue Lys-220 is modified to N6-carboxylysine. Substrate is bound at residue His-222. Ni(2+) is bound by residues His-249 and His-275. His-323 acts as the Proton donor in catalysis. Asp-363 lines the Ni(2+) pocket.

It belongs to the metallo-dependent hydrolases superfamily. Urease alpha subunit family. Heterotrimer of UreA (gamma), UreB (beta) and UreC (alpha) subunits. Three heterotrimers associate to form the active enzyme. Ni cation serves as cofactor. Carboxylation allows a single lysine to coordinate two nickel ions.

Its subcellular location is the cytoplasm. It catalyses the reaction urea + 2 H2O + H(+) = hydrogencarbonate + 2 NH4(+). Its pathway is nitrogen metabolism; urea degradation; CO(2) and NH(3) from urea (urease route): step 1/1. This Corynebacterium glutamicum (strain ATCC 13032 / DSM 20300 / JCM 1318 / BCRC 11384 / CCUG 27702 / LMG 3730 / NBRC 12168 / NCIMB 10025 / NRRL B-2784 / 534) protein is Urease subunit alpha.